The primary structure comprises 390 residues: DNA polymerase IV (390 aa).

Residues 6–187 enclose the UmuC domain; it reads VMHVDLDAFF…LDIAVMPGIG (182 aa). Mg(2+)-binding residues include D10 and D105. E106 is an active-site residue.

This sequence belongs to the DNA polymerase type-Y family. In terms of assembly, monomer. Requires Mg(2+) as cofactor.

The protein resides in the cytoplasm. It carries out the reaction DNA(n) + a 2'-deoxyribonucleoside 5'-triphosphate = DNA(n+1) + diphosphate. Functionally, poorly processive, error-prone DNA polymerase involved in untargeted mutagenesis. Copies undamaged DNA at stalled replication forks, which arise in vivo from mismatched or misaligned primer ends. These misaligned primers can be extended by PolIV. Exhibits no 3'-5' exonuclease (proofreading) activity. May be involved in translesional synthesis, in conjunction with the beta clamp from PolIII. The polypeptide is DNA polymerase IV (Dehalococcoides mccartyi (strain ATCC BAA-2100 / JCM 16839 / KCTC 5957 / BAV1)).